A 331-amino-acid polypeptide reads, in one-letter code: Ferredoxin--NADP reductase (331 aa).

T14, E33, Q41, Y46, V86, F120, D284, and S327 together coordinate FAD.

Belongs to the ferredoxin--NADP reductase type 2 family. As to quaternary structure, homodimer. The cofactor is FAD.

It carries out the reaction 2 reduced [2Fe-2S]-[ferredoxin] + NADP(+) + H(+) = 2 oxidized [2Fe-2S]-[ferredoxin] + NADPH. The polypeptide is Ferredoxin--NADP reductase (Picrophilus torridus (strain ATCC 700027 / DSM 9790 / JCM 10055 / NBRC 100828 / KAW 2/3)).